The sequence spans 548 residues: tRNA (guanine(26)-N(2))-dimethyltransferase (548 aa).

The Trm1 methyltransferase domain maps to 30-470; it reads ASLTEGSAII…APWSFVWDVL (441 aa). Arg57, Arg137, Asp155, and Ala186 together coordinate S-adenosyl-L-methionine. Positions 317, 320, 354, and 357 each coordinate Zn(2+). The tract at residues 523–548 is disordered; sequence QMNPTENWGPKSKPGKRTIAEVDSKS.

Belongs to the class I-like SAM-binding methyltransferase superfamily. Trm1 family.

It is found in the mitochondrion. The protein localises to the nucleus. It localises to the cytoplasm. The catalysed reaction is guanosine(26) in tRNA + 2 S-adenosyl-L-methionine = N(2)-dimethylguanosine(26) in tRNA + 2 S-adenosyl-L-homocysteine + 2 H(+). Its function is as follows. Dimethylates a single guanine residue at position 26 of nuclear- and mitochondrial-encoded tRNAs using S-adenosyl-L-methionine as donor of the methyl groups. Also has tRNA strand annealing and dissociation activity independently of its tRNA guanine-dimethyltransferase activity. The protein is tRNA (guanine(26)-N(2))-dimethyltransferase of Schizosaccharomyces pombe (strain 972 / ATCC 24843) (Fission yeast).